The primary structure comprises 469 residues: Adenosylhomocysteinase (469 aa).

Substrate-binding residues include threonine 63, aspartate 139, and glutamate 164. 165–167 (TTT) lines the NAD(+) pocket. The substrate site is built by lysine 194 and aspartate 198. Residues asparagine 199, 228–233 (GYGDVG), glutamate 251, asparagine 300, 321–323 (IGH), and asparagine 375 contribute to the NAD(+) site.

This sequence belongs to the adenosylhomocysteinase family. Requires NAD(+) as cofactor.

It localises to the cytoplasm. The enzyme catalyses S-adenosyl-L-homocysteine + H2O = L-homocysteine + adenosine. The protein operates within amino-acid biosynthesis; L-homocysteine biosynthesis; L-homocysteine from S-adenosyl-L-homocysteine: step 1/1. May play a key role in the regulation of the intracellular concentration of adenosylhomocysteine. The polypeptide is Adenosylhomocysteinase (Pseudomonas fluorescens (strain SBW25)).